A 359-amino-acid polypeptide reads, in one-letter code: HTH-type transcriptional regulator Rv3575c (359 aa).

The HTH lacI-type domain maps to 9 to 64 (ATLASLAAELKVSRTTVSNAFNRPDQLSADLRERVLATAKRLGYAGPDPVARSLRT). Residues 11–30 (LASLAAELKVSRTTVSNAFN) constitute a DNA-binding region (H-T-H motif).

Transcriptional regulator that negatively regulates transcription of the mce4 operon, which is involved in cholesterol transport and utilization. Acts by binding to the promoter region of the mce4 operon. It affects the utilization of host cholesterol as a carbon source, impacting the host's innate immune response. The polypeptide is HTH-type transcriptional regulator Rv3575c (Mycobacterium tuberculosis (strain ATCC 25618 / H37Rv)).